The chain runs to 353 residues: DNA integrity scanning protein DisA (353 aa).

One can recognise a DAC domain in the interval 6-144 (DKELMNILKI…GGIKYVLRDS (139 aa)). ATP is bound by residues glycine 73, leucine 91, and 104–108 (TRHRT).

Belongs to the DisA family. As to quaternary structure, homooctamer. The cofactor is Mg(2+).

It carries out the reaction 2 ATP = 3',3'-c-di-AMP + 2 diphosphate. Participates in a DNA-damage check-point that is active prior to asymmetric division when DNA is damaged. DisA forms globular foci that rapidly scan along the chromosomes during sporulation, searching for lesions. When a lesion is present, DisA pauses at the lesion site. This triggers a cellular response that culminates in a temporary block in sporulation initiation. Functionally, also has diadenylate cyclase activity, catalyzing the condensation of 2 ATP molecules into cyclic di-AMP (c-di-AMP). c-di-AMP acts as a signaling molecule that couples DNA integrity with progression of sporulation. The rise in c-di-AMP level generated by DisA while scanning the chromosome, operates as a positive signal that advances sporulation; upon encountering a lesion, the DisA focus arrests at the damaged site and halts c-di-AMP synthesis. In Clostridium botulinum (strain 657 / Type Ba4), this protein is DNA integrity scanning protein DisA.